Here is a 305-residue protein sequence, read N- to C-terminus: Translation initiation factor eIF2B subunit alpha (305 aa).

Lysine 35 carries the post-translational modification N6-acetyllysine.

This sequence belongs to the eIF-2B alpha/beta/delta subunits family. Component of the translation initiation factor 2B (eIF2B) complex which is a heterodecamer of two sets of five different subunits: alpha, beta, gamma, delta and epsilon. Subunits alpha, beta and delta comprise a regulatory subcomplex and subunits epsilon and gamma comprise a catalytic subcomplex. Within the complex, the hexameric regulatory complex resides at the center, with the two heterodimeric catalytic subcomplexes bound on opposite sides.

It localises to the cytoplasm. It is found in the cytosol. With respect to regulation, activated by the chemical integrated stress response (ISR) inhibitor ISRIB which stimulates guanine nucleotide exchange factor activity for both phosphorylated and unphosphorylated eIF2. In terms of biological role, acts as a component of the translation initiation factor 2B (eIF2B) complex, which catalyzes the exchange of GDP for GTP on eukaryotic initiation factor 2 (eIF2) gamma subunit. Its guanine nucleotide exchange factor activity is repressed when bound to eIF2 complex phosphorylated on the alpha subunit, thereby limiting the amount of methionyl-initiator methionine tRNA available to the ribosome and consequently global translation is repressed. The protein is Translation initiation factor eIF2B subunit alpha (EIF2B1) of Macaca fascicularis (Crab-eating macaque).